We begin with the raw amino-acid sequence, 470 residues long: Uronate isomerase (470 aa).

The protein belongs to the metallo-dependent hydrolases superfamily. Uronate isomerase family.

It carries out the reaction D-glucuronate = D-fructuronate. The enzyme catalyses aldehydo-D-galacturonate = keto-D-tagaturonate. It participates in carbohydrate metabolism; pentose and glucuronate interconversion. This Shigella boydii serotype 4 (strain Sb227) protein is Uronate isomerase.